Reading from the N-terminus, the 362-residue chain is 3-dehydroquinate synthase (362 aa).

Residues 71–76 (DGEQYK), 105–109 (GVVGD), 129–130 (TT), Lys-142, Lys-151, and 169–172 (CLKT) each bind NAD(+). Zn(2+) contacts are provided by Glu-184, His-247, and His-264.

It belongs to the sugar phosphate cyclases superfamily. Dehydroquinate synthase family. The cofactor is Co(2+). Zn(2+) serves as cofactor. Requires NAD(+) as cofactor.

The protein resides in the cytoplasm. It carries out the reaction 7-phospho-2-dehydro-3-deoxy-D-arabino-heptonate = 3-dehydroquinate + phosphate. The protein operates within metabolic intermediate biosynthesis; chorismate biosynthesis; chorismate from D-erythrose 4-phosphate and phosphoenolpyruvate: step 2/7. Catalyzes the conversion of 3-deoxy-D-arabino-heptulosonate 7-phosphate (DAHP) to dehydroquinate (DHQ). The protein is 3-dehydroquinate synthase of Shigella dysenteriae serotype 1 (strain Sd197).